The sequence spans 273 residues: 6-carboxyhexanoate--CoA ligase (273 aa).

The protein belongs to the BioW family. As to quaternary structure, homodimer. Requires Mg(2+) as cofactor.

It catalyses the reaction heptanedioate + ATP + CoA = 6-carboxyhexanoyl-CoA + AMP + diphosphate. It participates in metabolic intermediate metabolism; pimeloyl-CoA biosynthesis; pimeloyl-CoA from pimelate: step 1/1. Functionally, catalyzes the transformation of pimelate into pimeloyl-CoA with concomitant hydrolysis of ATP to AMP. The chain is 6-carboxyhexanoate--CoA ligase from Alkalihalophilus pseudofirmus (strain ATCC BAA-2126 / JCM 17055 / OF4) (Bacillus pseudofirmus).